A 224-amino-acid polypeptide reads, in one-letter code: Ribonuclease 3 (224 aa).

Positions 4 to 126 constitute an RNase III domain; that stretch reads LDRLQHKIGY…IIGAMSLDSN (123 aa). Glu-39 contributes to the Mg(2+) binding site. The active site involves Asp-43. Mg(2+) contacts are provided by Asp-112 and Glu-115. Residue Glu-115 is part of the active site. Residues 153–223 form the DRBM domain; it reads DPKTRLQEYL…AEQILKVLDI (71 aa).

The protein belongs to the ribonuclease III family. In terms of assembly, homodimer. The cofactor is Mg(2+).

The protein resides in the cytoplasm. It carries out the reaction Endonucleolytic cleavage to 5'-phosphomonoester.. Functionally, digests double-stranded RNA. Involved in the processing of primary rRNA transcript to yield the immediate precursors to the large and small rRNAs (23S and 16S). Processes some mRNAs, and tRNAs when they are encoded in the rRNA operon. Processes pre-crRNA and tracrRNA of type II CRISPR loci if present in the organism. The chain is Ribonuclease 3 from Actinobacillus succinogenes (strain ATCC 55618 / DSM 22257 / CCUG 43843 / 130Z).